We begin with the raw amino-acid sequence, 70 residues long: MMRDAEERITRLEETVAHQLKTIEELSDQLAEQWKVVEQTRAKLDRLTERFLSLEEQAQDATPVTRPPHY.

It belongs to the SlyX family.

In Rhizobium meliloti (strain 1021) (Ensifer meliloti), this protein is Protein SlyX homolog.